The following is a 159-amino-acid chain: Ribosomal RNA large subunit methyltransferase H (159 aa).

S-adenosyl-L-methionine-binding positions include Leu-76, Gly-108, and 127–132; that span reads FSKMTF.

This sequence belongs to the RNA methyltransferase RlmH family. As to quaternary structure, homodimer.

It localises to the cytoplasm. The enzyme catalyses pseudouridine(1915) in 23S rRNA + S-adenosyl-L-methionine = N(3)-methylpseudouridine(1915) in 23S rRNA + S-adenosyl-L-homocysteine + H(+). Its function is as follows. Specifically methylates the pseudouridine at position 1915 (m3Psi1915) in 23S rRNA. The protein is Ribosomal RNA large subunit methyltransferase H of Clostridium kluyveri (strain NBRC 12016).